A 547-amino-acid polypeptide reads, in one-letter code: CTP synthase (547 aa).

An amidoligase domain region spans residues 1-267 (MTKFVFVTGG…AQQTLALLNL (267 aa)). Ser13 provides a ligand contact to CTP. Ser13 is a binding site for UTP. Residues 14–19 (SIGKGI) and Asp71 contribute to the ATP site. Mg(2+) contacts are provided by Asp71 and Glu141. CTP-binding positions include 148–150 (DIE), 188–193 (KTKPTQ), and Lys224. Residues 188 to 193 (KTKPTQ) and Lys224 each bind UTP. A Glutamine amidotransferase type-1 domain is found at 292–534 (EIALVGKYVQ…VKAAVDHYST (243 aa)). Gly354 contributes to the L-glutamine binding site. The Nucleophile; for glutamine hydrolysis role is filled by Cys381. Residues 382-385 (LGMQ), Glu405, and Arg462 contribute to the L-glutamine site. Catalysis depends on residues His507 and Glu509.

Belongs to the CTP synthase family. Homotetramer.

The catalysed reaction is UTP + L-glutamine + ATP + H2O = CTP + L-glutamate + ADP + phosphate + 2 H(+). It carries out the reaction L-glutamine + H2O = L-glutamate + NH4(+). The enzyme catalyses UTP + NH4(+) + ATP = CTP + ADP + phosphate + 2 H(+). It functions in the pathway pyrimidine metabolism; CTP biosynthesis via de novo pathway; CTP from UDP: step 2/2. Allosterically activated by GTP, when glutamine is the substrate; GTP has no effect on the reaction when ammonia is the substrate. The allosteric effector GTP functions by stabilizing the protein conformation that binds the tetrahedral intermediate(s) formed during glutamine hydrolysis. Inhibited by the product CTP, via allosteric rather than competitive inhibition. In terms of biological role, catalyzes the ATP-dependent amination of UTP to CTP with either L-glutamine or ammonia as the source of nitrogen. Regulates intracellular CTP levels through interactions with the four ribonucleotide triphosphates. In Rippkaea orientalis (strain PCC 8801 / RF-1) (Cyanothece sp. (strain PCC 8801)), this protein is CTP synthase.